A 320-amino-acid chain; its full sequence is MQTRKTLSWIKEEITRSISVSLMIYIITGAYISNAYPIFAQQGYENPREATGRIVCANCHLANKPVGIEVPQAVLPDTVFEAVVRIPYDMQLKQVLANGKKGALNVGAVLILPEGFELAPPDRISPEMKEKIGNLSFQSYRPAKKNILVIGPVPGQKYSEITFPILSPDPAAKKDTHFLKYPIYVGGNRGRGQIYPDGSKSNNTVYNATAAGIVSKIIRKEKGGYEITITDAPEGRQVIDSIPPGPELLVSEGESIKLDQPLTSNPNVGGFGQGDAEIVLQDPLRVQGLLFFLASVILAQIFLVLKKKQFEKVQLSEMNF.

The first 35 residues, 1-35 (MQTRKTLSWIKEEITRSISVSLMIYIITGAYISNA), serve as a signal peptide directing secretion. The heme site is built by tyrosine 36, cysteine 56, cysteine 59, and histidine 60. The chain crosses the membrane as a helical span at residues 286-306 (VQGLLFFLASVILAQIFLVLK).

It belongs to the cytochrome f family. As to quaternary structure, the 4 large subunits of the cytochrome b6-f complex are cytochrome b6, subunit IV (17 kDa polypeptide, petD), cytochrome f and the Rieske protein, while the 4 small subunits are PetG, PetL, PetM and PetN. The complex functions as a dimer. It depends on heme as a cofactor.

Its subcellular location is the plastid. The protein localises to the chloroplast thylakoid membrane. Its function is as follows. Component of the cytochrome b6-f complex, which mediates electron transfer between photosystem II (PSII) and photosystem I (PSI), cyclic electron flow around PSI, and state transitions. The sequence is that of Cytochrome f from Populus alba (White poplar).